The sequence spans 340 residues: N-acetyl-gamma-glutamyl-phosphate reductase (340 aa).

Cysteine 146 is a catalytic residue.

Belongs to the NAGSA dehydrogenase family. Type 1 subfamily.

The protein resides in the cytoplasm. It carries out the reaction N-acetyl-L-glutamate 5-semialdehyde + phosphate + NADP(+) = N-acetyl-L-glutamyl 5-phosphate + NADPH + H(+). Its pathway is amino-acid biosynthesis; L-arginine biosynthesis; N(2)-acetyl-L-ornithine from L-glutamate: step 3/4. Its function is as follows. Catalyzes the NADPH-dependent reduction of N-acetyl-5-glutamyl phosphate to yield N-acetyl-L-glutamate 5-semialdehyde. This chain is N-acetyl-gamma-glutamyl-phosphate reductase, found in Streptococcus thermophilus (strain CNRZ 1066).